A 461-amino-acid polypeptide reads, in one-letter code: Protein FAM124B (461 aa).

Serine 49 bears the Phosphoserine mark. A disordered region spans residues 302–346; it reads VELPEPGGRPVSDGSSNTWWKSAGGSAQPSSPATESQPQLSSLHL. The span at 323–334 shows a compositional bias: low complexity; that stretch reads SAGGSAQPSSPA.

It belongs to the FAM124 family. Interacts with CHD7 and CHD8.

It is found in the nucleus. The chain is Protein FAM124B (FAM124B) from Bos taurus (Bovine).